A 425-amino-acid chain; its full sequence is Histone-binding protein RBBP4 (425 aa).

An N-acetylalanine modification is found at Ala2. WD repeat units lie at residues 32–125, 126–175, 176–223, 225–270, 271–314, 315–371, and 372–404; these read YDLV…NHEG, EVNR…RLRG, HQKE…KTIF, GHTA…HSVD, AHTA…HSFE, SHKD…FIHG, and GHTAKISDFSWNPNEPWVICSVSEDNIMQVWQM.

This sequence belongs to the WD repeat RBAP46/RBAP48/MSI1 family. In terms of assembly, binds directly to histone H4, probably via helix 1 of the histone fold, a region that is not accessible when histone H4 is in chromatin. Forms a large corepressor complex that contains ncor1, sin3a and possibly sin3b, histone deacetylases hdac2, hdac1, rbbp4 and possibly rbbp7.

Its subcellular location is the nucleus. The protein resides in the chromosome. The protein localises to the telomere. Its function is as follows. Core histone-binding subunit that may target chromatin assembly factors, chromatin remodeling factors and histone deacetylases to their histone substrates in a manner that is regulated by nucleosomal DNA. Component of several complexes which regulate chromatin metabolism. The protein is Histone-binding protein RBBP4 (rbbp4) of Xenopus tropicalis (Western clawed frog).